Here is a 798-residue protein sequence, read N- to C-terminus: Integrin beta-1 (798 aa).

Positions 1-20 (MNLQLIFWIGLISSVCCVFG) are cleaved as a signal peptide. Residues 21–728 (QADENRCLKA…ETPECPTGPD (708 aa)) are Extracellular-facing. A PSI domain is found at 26-76 (RCLKANAKSCGECIQAGPNCGWCTNSTFLQEGMPTSARCDDLEALKKKGCH). Disulfide bonds link C27/C45, C35/C464, C38/C64, C48/C75, C207/C213, C261/C301, C401/C415, C435/C462, C466/C486, C477/C489, C491/C500, C502/C533, C516/C531, C525/C536, C538/C553, C555/C576, C560/C574, C568/C579, C581/C590, C592/C615, C599/C613, C607/C618, C620/C630, C633/C636, C640/C691, C646/C665, C649/C661, and C699/C723. N-linked (GlcNAc...) asparagine glycosylation occurs at N50. Basic and acidic residues predominate over residues 75 to 91 (CHPNDIENPRGSKDIKK). Residues 75–105 (CHPNDIENPRGSKDIKKNKNVTNRSKGTAEK) are disordered. N94 and N97 each carry an N-linked (GlcNAc...) asparagine glycan. The region spanning 140 to 378 (DYPIDLYYLM…QLIIDAYNSL (239 aa)) is the VWFA domain. Mg(2+) is bound by residues S152 and S154. Residues S154, D157, D158, and E189 each coordinate Ca(2+). The CX3CL1-binding stretch occupies residues 207 to 213 (CTNEQNC). Residue N212 is glycosylated (N-linked (GlcNAc...) asparagine). The Ca(2+) site is built by N244, D246, P248, and E249. E249 is a binding site for Mg(2+). N269 carries an N-linked (GlcNAc...) asparagine glycan. The interval 295–314 (LPNDGQCHLENDVYTMSHYY) is CX3CL1-binding. A362 is a binding site for Ca(2+). Residues N363, N406, and N417 are each glycosylated (N-linked (GlcNAc...) asparagine). The segment at 383–465 (ILENSKLPEG…IILQFICECE (83 aa)) is interaction with TMEM182. 4 consecutive I-EGF domains span residues 466-501 (CQGE…RHCE), 502-554 (CSTD…KFCE), 555-591 (CDNF…SACD), and 592-631 (CSLD…PTCE). N481 is a glycosylation site (N-linked (GlcNAc...) asparagine). N520 is a glycosylation site (N-linked (GlcNAc...) asparagine). N584 is a glycosylation site (N-linked (GlcNAc...) asparagine). N669 is a glycosylation site (N-linked (GlcNAc...) asparagine). Residues 729–749 (IIPIVAGVVAGIVLIGLALLL) traverse the membrane as a helical segment. Residues 750–798 (IWKLLMIIHDRREFAKFEKEKMNAKWDTGENPIYKSAVTTVVNPKYEGK) lie on the Cytoplasmic side of the membrane. The signal for sorting from recycling endosomes; interaction with ACAP1 stretch occupies residues 762-767 (EFAKFE). At T777 the chain carries Phosphothreonine. A Phosphotyrosine modification is found at Y783. Residue S785 is modified to Phosphoserine. An interaction with ITGB1BP1 region spans residues 785–792 (SAVTTVVN). Residue T789 is modified to Phosphothreonine. At K794 the chain carries N6-acetyllysine; alternate. K794 is covalently cross-linked (Glycyl lysine isopeptide (Lys-Gly) (interchain with G-Cter in SUMO1); alternate).

The protein belongs to the integrin beta chain family. Interacts with seprase FAP (seprase); the interaction occurs at the cell surface of invadopodia membrane in a collagen-dependent manner. Heterodimer of an alpha and a beta subunit. Beta-1 associates with either alpha-1, alpha-2, alpha-3, alpha-4, alpha-5, alpha-6, alpha-7, alpha-8, alpha-9, alpha-10, alpha-11 or alpha-V. ITGA6:ITGB1 is found in a complex with CD9; interaction takes place in oocytes and is involved in sperm-egg fusion. Binds LGALS3BP and NMRK2, when associated with alpha-7, but not with alpha-5. Interacts with FLNB, FLNC and RANBP9. Interacts with KRT1 in the presence of RACK1 and SRC. Interacts with JAML; integrin alpha-4/beta-1 may regulate leukocyte to endothelial cells adhesion by controlling JAML homodimerization. Interacts with RAB21. Interacts (via the cytoplasmic region) with RAB25 (via the hypervariable C-terminal region). Interacts with MYO10. Interacts with ITGB1BP1 (via C-terminal region); the interaction is a prerequisite for focal adhesion disassembly. Interacts with TLN1; the interaction is prevented by competitive binding of ITGB1BP1. Interacts with ACAP1; required for ITGB1 recycling. Interacts with ASAP3. Interacts with FERMT2; the interaction is inhibited in presence of ITGB1BP1. Interacts with DAB2. Interacts with FGR and HCK. Interacts with EMP2; the interaction may be direct or indirect and ITGB1 has a heterodimer form. ITGA5:ITGB1 interacts with CCN3. ITGA4:ITGB1 is found in a ternary complex with CX3CR1 and CX3CL1. ITGA5:ITGB1 interacts with FBN1. ITGA5:ITGB1 interacts with IL1B. Interacts with MDK. ITGA4:ITGB1 interacts with MDK; this interaction mediates MDK-induced osteoblast cells migration through PXN phosphorylation. ITGA6:ITGB1 interacts with MDK; this interaction mediates MDK-induced neurite-outgrowth. ITGA5:ITGB1 interacts with ACE2. Interacts with TMEM182 and LAMB1. Interacts with tensin TNS3; TNS3 also interacts with PEAK1, thus acting as an adapter molecule to bridge the association of PEAK1 with ITGB1. Interacts with tensin TNS4; the interaction displaces tensin TNS3 from the ITGB1 cytoplasmic tail and promotes ITGB1 stability. Integrin ITGA9:ITGB1 interacts with SPP1/OPN (via N-terminus). Integrin ITGA9:ITGB1 interacts with TNC/TNFN3 (via the 3rd Fibronectin type-III domain). Integrins ITGA4:ITGB1 and ITGA9:ITGB1 interact with SVEP1 (via Sushi domain 21); thereby inhibit Ca(2+) intracellular signaling and as a result repress vasocontraction. ITGA4:ITGB1 and ITGA5:ITGB1 interacts with SELP. Interacts with CD248. ITGA5:ITGB1 interacts with IGFBP1. ITGA4:ITGB1 interacts with BCAM. Interacts with ADGRG6. As to quaternary structure, interacts with the C-terminal region of FLNC. Interacts with filamin FLNA isoform 3/VAR-1. In terms of assembly, interacts with ACE2. Interacts with alpha-7B in cardiomyocytes of adult heart and alpha-7A and alpha-7B in adult skeletal muscle. Interacts with filamin FLNA isoform 3/VAR-1.

Its subcellular location is the cell membrane. The protein localises to the cell projection. It localises to the invadopodium membrane. It is found in the ruffle membrane. The protein resides in the recycling endosome. Its subcellular location is the melanosome. The protein localises to the lamellipodium. It localises to the ruffle. It is found in the cell junction. The protein resides in the focal adhesion. Its subcellular location is the sarcolemma. Integrins alpha-1/beta-1, alpha-2/beta-1, alpha-10/beta-1 and alpha-11/beta-1 are receptors for collagen. Integrins alpha-1/beta-1 and alpha-2/beta-2 recognize the proline-hydroxylated sequence G-F-P-G-E-R in collagen. Integrins alpha-2/beta-1, alpha-3/beta-1, alpha-4/beta-1, alpha-5/beta-1, alpha-8/beta-1, alpha-10/beta-1, alpha-11/beta-1 and alpha-V/beta-1 are receptors for fibronectin. Alpha-4/beta-1 recognizes one or more domains within the alternatively spliced CS-1 and CS-5 regions of fibronectin. Integrin alpha-5/beta-1 is a receptor for fibrinogen. Integrin alpha-1/beta-1, alpha-2/beta-1, alpha-6/beta-1 and alpha-7/beta-1 are receptors for lamimin. Integrin alpha-6/beta-1 (ITGA6:ITGB1) is present in oocytes and is involved in sperm-egg fusion. Integrin alpha-4/beta-1 is a receptor for VCAM1 and recognizes the sequence Q-I-D-S in VCAM1. Integrin alpha-9/beta-1 is a receptor for VCAM1, cytotactin and osteopontin. It recognizes the sequence A-E-I-D-G-I-E-L in cytotactin. Integrin alpha-3/beta-1 is a receptor for epiligrin, thrombospondin and CSPG4. Integrin alpha-3/beta-1 provides a docking site for FAP (seprase) at invadopodia plasma membranes in a collagen-dependent manner and hence may participate in the adhesion, formation of invadopodia and matrix degradation processes, promoting cell invasion. Alpha-3/beta-1 may mediate with LGALS3 the stimulation by CSPG4 of endothelial cells migration. Integrin alpha-V/beta-1 is a receptor for vitronectin. Beta-1 integrins recognize the sequence R-G-D in a wide array of ligands. When associated with alpha-7/beta-1 integrin, regulates cell adhesion and laminin matrix deposition. Involved in promoting endothelial cell motility and angiogenesis. Involved in osteoblast compaction through the fibronectin fibrillogenesis cell-mediated matrix assembly process and the formation of mineralized bone nodules. May be involved in up-regulation of the activity of kinases such as PKC via binding to KRT1. Together with KRT1 and RACK1, serves as a platform for SRC activation or inactivation. Plays a mechanistic adhesive role during telophase, required for the successful completion of cytokinesis. ITGA4:ITGB1 binds to fractalkine (CX3CL1) and may act as its coreceptor in CX3CR1-dependent fractalkine signaling. ITGA4:ITGB1 and ITGA5:ITGB1 bind to PLA2G2A via a site (site 2) which is distinct from the classical ligand-binding site (site 1) and this induces integrin conformational changes and enhanced ligand binding to site 1. ITGA5:ITGB1 acts as a receptor for fibrillin-1 (FBN1) and mediates R-G-D-dependent cell adhesion to FBN1. ITGA5:ITGB1 acts as a receptor for fibronectin FN1 and mediates R-G-D-dependent cell adhesion to FN1. ITGA5:ITGB1 is a receptor for IL1B and binding is essential for IL1B signaling. ITGA5:ITGB3 is a receptor for soluble CD40LG and is required for CD40/CD40LG signaling. Plays an important role in myoblast differentiation and fusion during skeletal myogenesis. ITGA9:ITGB1 may play a crucial role in SVEP1/polydom-mediated myoblast cell adhesion. Integrins ITGA9:ITGB1 and ITGA4:ITGB1 repress PRKCA-mediated L-type voltage-gated channel Ca(2+) influx and ROCK-mediated calcium sensitivity in vascular smooth muscle cells via their interaction with SVEP1, thereby inhibit vasocontraction. This chain is Integrin beta-1 (ITGB1), found in Bos taurus (Bovine).